A 108-amino-acid polypeptide reads, in one-letter code: Tubulin-specific chaperone A (108 aa).

Alanine 2 carries the post-translational modification N-acetylalanine.

Belongs to the TBCA family. In terms of assembly, supercomplex made of cofactors A to E. Cofactors A and D function by capturing and stabilizing tubulin in a quasi-native conformation. Cofactor E binds to the cofactor D-tubulin complex; interaction with cofactor C then causes the release of tubulin polypeptides that are committed to the native state.

It localises to the cytoplasm. The protein localises to the cytoskeleton. Tubulin-folding protein; involved in the early step of the tubulin folding pathway. In Gallus gallus (Chicken), this protein is Tubulin-specific chaperone A (TBCA).